The sequence spans 196 residues: Putative NADH dehydrogenase/NAD(P)H nitroreductase PXO_03909 (196 aa).

This sequence belongs to the nitroreductase family. HadB/RutE subfamily. FMN serves as cofactor.

The chain is Putative NADH dehydrogenase/NAD(P)H nitroreductase PXO_03909 from Xanthomonas oryzae pv. oryzae (strain PXO99A).